We begin with the raw amino-acid sequence, 95 residues long: Integration host factor subunit beta (95 aa).

The tract at residues 56–76 is disordered; it reads RAPRTGRNPKTGTSVDLDGKY.

It belongs to the bacterial histone-like protein family. As to quaternary structure, heterodimer of an alpha and a beta chain.

Its function is as follows. This protein is one of the two subunits of integration host factor, a specific DNA-binding protein that functions in genetic recombination as well as in transcriptional and translational control. The sequence is that of Integration host factor subunit beta from Shewanella sediminis (strain HAW-EB3).